Reading from the N-terminus, the 328-residue chain is UPF0194 membrane protein YPA_1093 (328 aa).

Residues 1–22 (MNRKKIIVAAVIVALLATLAYG) form the signal peptide. Coiled-coil stretches lie at residues 80-109 (YLNA…REEE) and 141-209 (KAVS…ILLA).

Belongs to the UPF0194 family.

It localises to the periplasm. The protein is UPF0194 membrane protein YPA_1093 of Yersinia pestis bv. Antiqua (strain Antiqua).